A 134-amino-acid polypeptide reads, in one-letter code: Large ribosomal subunit protein bL17 (134 aa).

The protein belongs to the bacterial ribosomal protein bL17 family. In terms of assembly, part of the 50S ribosomal subunit. Contacts protein L32.

This chain is Large ribosomal subunit protein bL17, found in Anaplasma marginale (strain Florida).